Consider the following 297-residue polypeptide: Oxidoreductase R1 (297 aa).

This sequence belongs to the asaB hydroxylase/desaturase family.

The protein operates within secondary metabolite biosynthesis. Functionally, oxidoreductase; part of the gene cluster that mediates the biosynthesis of squalestatin S1 (SQS1, also known as zaragozic acid A), a heavily oxidized fungal polyketide that offers potent cholesterol lowering activity by targeting squalene synthase (SS). SQS1 is composed of a 2,8-dioxobicyclic[3.2.1]octane-3,4,5-tricarboxyclic acid core that is connected to two lipophilic polyketide arms. These initial steps feature the priming of an unusual benzoic acid starter unit onto the highly reducing polyketide synthase pks2, followed by oxaloacetate extension and product release to generate a tricarboxylic acid containing product. The phenylalanine ammonia lyase (PAL) M7 and the acyl-CoA ligase M9 are involved in transforming phenylalanine into benzoyl-CoA. The citrate synthase-like protein R3 is involved in connecting the C-alpha-carbons of the hexaketide chain and oxaloacetate to afford the tricarboxylic acid unit. The potential hydrolytic enzymes, M8 and M10, are in close proximity to pks2 and may participate in product release. On the other side, the tetraketide arm is synthesized by a the squalestatin tetraketide synthase pks1 and enzymatically esterified to the core in the last biosynthetic step, by the acetyltransferase M4. The biosynthesis of the tetraketide must involve 3 rounds of chain extension. After the first and second rounds methyl-transfer occurs, and in all rounds of extension the ketoreductase and dehydratase are active. The enoyl reductase and C-MeT of pks1 are not active in the final round of extension. The acetyltransferase M4 appears to have a broad substrate selectivity for its acyl CoA substrate, allowing the in vitro synthesis of novel squalestatins. The biosynthesis of SQS1 requires several oxidative steps likely performed by oxidoreductases M1, R1 and R2. Finally, in support of the identification of the cluster as being responsible for SQS1 production, the cluster contains a gene encoding a putative squalene synthase (SS) R6, suggesting a likely mechanism for self-resistance. This chain is Oxidoreductase R1, found in Phoma sp. (strain ATCC 20986 / MF5453).